The sequence spans 104 residues: Large ribosomal subunit protein uL24 (104 aa).

Belongs to the universal ribosomal protein uL24 family. In terms of assembly, part of the 50S ribosomal subunit.

One of two assembly initiator proteins, it binds directly to the 5'-end of the 23S rRNA, where it nucleates assembly of the 50S subunit. In terms of biological role, one of the proteins that surrounds the polypeptide exit tunnel on the outside of the subunit. This is Large ribosomal subunit protein uL24 from Halothermothrix orenii (strain H 168 / OCM 544 / DSM 9562).